The chain runs to 227 residues: Cytochrome c oxidase subunit 2 (227 aa).

The Mitochondrial intermembrane segment spans residues 1 to 14 (MAYPFQLGLQDATS). The chain crosses the membrane as a helical span at residues 15–45 (PIMEELLHFHDHTLMIVFLISSLVLYIISLM). At 46 to 59 (LTTKLTHTSTMDAQ) the chain is on the mitochondrial matrix side. The helical transmembrane segment at 60–87 (EVETVWTILPAIILILIALPSLRILYMM) threads the bilayer. Over 88 to 227 (DEINNPSLTV…YFETWSALMV (140 aa)) the chain is Mitochondrial intermembrane. Cu cation-binding residues include His161, Cys196, Glu198, Cys200, His204, and Met207. Glu198 lines the Mg(2+) pocket. A Phosphotyrosine modification is found at Tyr218.

Belongs to the cytochrome c oxidase subunit 2 family. In terms of assembly, component of the cytochrome c oxidase (complex IV, CIV), a multisubunit enzyme composed of 14 subunits. The complex is composed of a catalytic core of 3 subunits MT-CO1, MT-CO2 and MT-CO3, encoded in the mitochondrial DNA, and 11 supernumerary subunits COX4I, COX5A, COX5B, COX6A, COX6B, COX6C, COX7A, COX7B, COX7C, COX8 and NDUFA4, which are encoded in the nuclear genome. The complex exists as a monomer or a dimer and forms supercomplexes (SCs) in the inner mitochondrial membrane with NADH-ubiquinone oxidoreductase (complex I, CI) and ubiquinol-cytochrome c oxidoreductase (cytochrome b-c1 complex, complex III, CIII), resulting in different assemblies (supercomplex SCI(1)III(2)IV(1) and megacomplex MCI(2)III(2)IV(2)). Found in a complex with TMEM177, COA6, COX18, COX20, SCO1 and SCO2. Interacts with TMEM177 in a COX20-dependent manner. Interacts with COX20. Interacts with COX16. Requires Cu cation as cofactor.

Its subcellular location is the mitochondrion inner membrane. The catalysed reaction is 4 Fe(II)-[cytochrome c] + O2 + 8 H(+)(in) = 4 Fe(III)-[cytochrome c] + 2 H2O + 4 H(+)(out). Its function is as follows. Component of the cytochrome c oxidase, the last enzyme in the mitochondrial electron transport chain which drives oxidative phosphorylation. The respiratory chain contains 3 multisubunit complexes succinate dehydrogenase (complex II, CII), ubiquinol-cytochrome c oxidoreductase (cytochrome b-c1 complex, complex III, CIII) and cytochrome c oxidase (complex IV, CIV), that cooperate to transfer electrons derived from NADH and succinate to molecular oxygen, creating an electrochemical gradient over the inner membrane that drives transmembrane transport and the ATP synthase. Cytochrome c oxidase is the component of the respiratory chain that catalyzes the reduction of oxygen to water. Electrons originating from reduced cytochrome c in the intermembrane space (IMS) are transferred via the dinuclear copper A center (CU(A)) of subunit 2 and heme A of subunit 1 to the active site in subunit 1, a binuclear center (BNC) formed by heme A3 and copper B (CU(B)). The BNC reduces molecular oxygen to 2 water molecules using 4 electrons from cytochrome c in the IMS and 4 protons from the mitochondrial matrix. The protein is Cytochrome c oxidase subunit 2 (MT-CO2) of Urocyon cinereoargenteus (Gray fox).